An 880-amino-acid polypeptide reads, in one-letter code: MTIEHYNLGERYNPRACERKWQAIWDEKKTFQTVQEDRREKYYVLEMFPYPSGRIHMGHVRNYAMGDVVARYKRAKGFNVLHPMGWDAFGMPAENAAMQNKVHPKTWTYQNIAVMRGQLKQLGLSVDWSREFATCDVDYYHRQQMLFLDFYQKGLVARKVAKVNWDPVDQTVLANEQVVDGRGWRSGALVEQRELTQWFFKISDFSEDLLAGLEELEQWPEKVRIMQKNWIGKSQGLLIRWALKSTEEADEVCKSFDEVVCYSTRPDTLFGASFLALSVDHPLAQALAQKDKALEFFIENCRSGGTTTAELETAEKQGFRTSLVAVHPFDVAVHIPVYIANFVLMDYGTGAVFGCPAHDQRDFDFARKYDLPVQPVVLPSGVEREDFAITETPYLGDGVMINSSFLDGLTPQQAFEEAAKRLEGQMLNGKPQAEKTVQFRLRDWGISRQRYWGCPIPMIHCTSCGVVPVPRADLPVVLPDDVTFEQPGNPLVCHETWKSVACPVCGQFAKRETDTMDTFVDSSWYYARFTAPFAQEPVDKKATTEWLPVQQYIGGIEHAILHLLYARFFTRAMKSMGYVTVDEPFKGLFTQGMVVHETYRDEKDWVSPEEISIVEKDGKRQAYKLTDQSEVTIGSIEKMSKSKKNVVDPDDIIASYGADTVRWFILSDSPPERDVIWTESGVEGAHRFVQRVWRCVALSAPVLRDVVPCVGKQGAALQLSKVAHRTLYAVEDDLEKFAFNRAIARLYEFLNIMAPLLNRIENVEDEMKAALRQAMDFFLAMIAPIMPHLAEECHAALGEKTLISELAWPVCDRALTVEECYTLPVQINGKKRGEVTVAATASEAMIEEAVLALDFVKVHLVKKPVKKMIIVPKRIVNVVL.

The 'HIGH' region signature appears at 49–59; that stretch reads PYPSGRIHMGH. A 'KMSKS' region motif is present at residues 638-642; it reads KMSKS. Lysine 641 is a binding site for ATP.

This sequence belongs to the class-I aminoacyl-tRNA synthetase family.

It localises to the cytoplasm. It carries out the reaction tRNA(Leu) + L-leucine + ATP = L-leucyl-tRNA(Leu) + AMP + diphosphate. This chain is Leucine--tRNA ligase, found in Bartonella henselae (strain ATCC 49882 / DSM 28221 / CCUG 30454 / Houston 1) (Rochalimaea henselae).